The primary structure comprises 345 residues: Methionine import ATP-binding protein MetN 4 (345 aa).

One can recognise an ABC transporter domain in the interval 2 to 241 (IELTNITKTF…PQLRTTKRFV (240 aa)). 38–45 (GYSGAGKS) contributes to the ATP binding site.

The protein belongs to the ABC transporter superfamily. Methionine importer (TC 3.A.1.24) family. In terms of assembly, the complex is composed of two ATP-binding proteins (MetN), two transmembrane proteins (MetI) and a solute-binding protein (MetQ).

It is found in the cell membrane. The catalysed reaction is L-methionine(out) + ATP + H2O = L-methionine(in) + ADP + phosphate + H(+). The enzyme catalyses D-methionine(out) + ATP + H2O = D-methionine(in) + ADP + phosphate + H(+). Its function is as follows. Part of the ABC transporter complex MetNIQ involved in methionine import. Responsible for energy coupling to the transport system. The chain is Methionine import ATP-binding protein MetN 4 from Oceanobacillus iheyensis (strain DSM 14371 / CIP 107618 / JCM 11309 / KCTC 3954 / HTE831).